The sequence spans 104 residues: MGHHHHHHGHHGHHHHDTITYTTGVYGAPVVPMVQPMVQPMVQPMPIYGQPPMMGAPVMVPPPMMGAPVMVPQPMVYPTTTVVYETGHHHHHGHHHGHHHGHFF.

This is an uncharacterized protein from Dictyostelium discoideum (Social amoeba).